Consider the following 78-residue polypeptide: Large ribosomal subunit protein bL28 (78 aa).

It belongs to the bacterial ribosomal protein bL28 family.

The polypeptide is Large ribosomal subunit protein bL28 (Aromatoleum aromaticum (strain DSM 19018 / LMG 30748 / EbN1) (Azoarcus sp. (strain EbN1))).